A 216-amino-acid chain; its full sequence is Somatotropin (216 aa).

An N-terminal signal peptide occupies residues 1–26 (MAAGPRTSMLLAFALLCLPWTQEVGA). His-45 contributes to the Zn(2+) binding site. Cys-78 and Cys-189 are disulfide-bonded. Ser-131 carries the post-translational modification Phosphoserine. Position 198 (Glu-198) interacts with Zn(2+). A disulfide bond links Cys-206 and Cys-214.

The protein belongs to the somatotropin/prolactin family.

The protein resides in the secreted. Its function is as follows. Plays an important role in growth control. Its major role in stimulating body growth is to stimulate the liver and other tissues to secrete IGF1. It stimulates both the differentiation and proliferation of myoblasts. It also stimulates amino acid uptake and protein synthesis in muscle and other tissues. The sequence is that of Somatotropin (GH1) from Balaenoptera physalus (Fin whale).